A 292-amino-acid chain; its full sequence is MQTVTDPVEMQTISEKLRLGRQLIGVVMTMGALHEGHISLVKLAREQAGTVILTIFVNPTQFGPNEDFHRYPRPFEQDAALARSAGVDYLFAPEAGAIYPEGFSTAISCSGVSDLLEGEKRPGHFSGVATVVTKLLNITRPHLAVFGEKDAQQLAVIRRVVTDLNIPVKVVAAPTMRESNGLAVSSRNIYLTAGQRESAGAIWRSLQHALDRLAAGETGLKELAEATATMIASESGFRVDYVAFVDEETFMPAERALKGRSYRILAAVFAGGIRLIDNACFASPTHIAGEEA.

30 to 37 (MGALHEGH) contacts ATP. Residue H37 is the Proton donor of the active site. Residue Q61 participates in (R)-pantoate binding. Residue Q61 coordinates beta-alanine. 147–150 (GEKD) serves as a coordination point for ATP. A (R)-pantoate-binding site is contributed by Q153. 184–187 (VSSR) provides a ligand contact to ATP.

It belongs to the pantothenate synthetase family. As to quaternary structure, homodimer.

The protein resides in the cytoplasm. The catalysed reaction is (R)-pantoate + beta-alanine + ATP = (R)-pantothenate + AMP + diphosphate + H(+). It participates in cofactor biosynthesis; (R)-pantothenate biosynthesis; (R)-pantothenate from (R)-pantoate and beta-alanine: step 1/1. Functionally, catalyzes the condensation of pantoate with beta-alanine in an ATP-dependent reaction via a pantoyl-adenylate intermediate. The sequence is that of Pantothenate synthetase from Chlorobium phaeovibrioides (strain DSM 265 / 1930) (Prosthecochloris vibrioformis (strain DSM 265)).